A 232-amino-acid chain; its full sequence is Sugar fermentation stimulation protein homolog (232 aa).

Belongs to the SfsA family.

This Acidithiobacillus ferrooxidans (strain ATCC 23270 / DSM 14882 / CIP 104768 / NCIMB 8455) (Ferrobacillus ferrooxidans (strain ATCC 23270)) protein is Sugar fermentation stimulation protein homolog.